We begin with the raw amino-acid sequence, 257 residues long: MLAKRLVPCLDVKDGKVVKGVQFRNHEIVGDIVPLAARYAEEGADELVFYDITASAHERVVDKSWVSRVAEQIDIPFCVAGGIKTISQARELLAFGADKISINSPALTDPSLISRLQDEFGRQCIVIGIDSFFDATSNSYKVKQFTGDEAATKDTQWFTQDWVEEVQKRGCGEIVLNVMNQDGVRGGYDIKQLSLVRAICDVPLIASGGAGTMAHFRDVFIEAKVDAALAASVFHKAIINIGELKAYLAAEGIAIRR.

Active-site residues include Asp-11 and Asp-130.

This sequence belongs to the HisA/HisF family. In terms of assembly, heterodimer of HisH and HisF.

It localises to the cytoplasm. The enzyme catalyses 5-[(5-phospho-1-deoxy-D-ribulos-1-ylimino)methylamino]-1-(5-phospho-beta-D-ribosyl)imidazole-4-carboxamide + L-glutamine = D-erythro-1-(imidazol-4-yl)glycerol 3-phosphate + 5-amino-1-(5-phospho-beta-D-ribosyl)imidazole-4-carboxamide + L-glutamate + H(+). Its pathway is amino-acid biosynthesis; L-histidine biosynthesis; L-histidine from 5-phospho-alpha-D-ribose 1-diphosphate: step 5/9. In terms of biological role, IGPS catalyzes the conversion of PRFAR and glutamine to IGP, AICAR and glutamate. The HisF subunit catalyzes the cyclization activity that produces IGP and AICAR from PRFAR using the ammonia provided by the HisH subunit. This is Imidazole glycerol phosphate synthase subunit HisF from Shewanella baltica (strain OS223).